The primary structure comprises 278 residues: Alpha-tocopherol transfer protein (278 aa).

A CRAL-TRIO domain is found at 88–253 (RPRSILGLLK…EYGGKEFSME (166 aa)). D185 contacts a 1,2-diacyl-sn-glycero-3-phospho-(1D-myo-inositol-3,4-bisphosphate). Position 187 (F187) interacts with (+)-alpha-tocopherol. A 1,2-diacyl-sn-glycero-3-phospho-(1D-myo-inositol-3,4-bisphosphate) is bound at residue 190 to 192 (KVR). 208-211 (SMIK) is a binding site for a 1,2-diacyl-sn-glycero-3-phospho-(1D-myo-inositol-4,5-bisphosphate). A 1,2-diacyl-sn-glycero-3-phospho-(1D-myo-inositol-3,4-bisphosphate) is bound by residues K217 and R221.

Monomer and homotetramer. Phosphatidylinositol 4,5-bisphosphate binding induces the formation of homotetramers. Phosphatidylinositol 3,4-bisphosphate is less efficient in inducing tetramerization.

Its subcellular location is the cytoplasm. Functionally, binds (+)-alpha-tocopherol, enhances its transfer between separate membranes, and stimulates its release from liver cells. Binds both phosphatidylinositol 3,4-bisphosphate and phosphatidylinositol 4,5-bisphosphate; the resulting conformation change is important for the release of the bound alpha-tocopherol. This Mus musculus (Mouse) protein is Alpha-tocopherol transfer protein (Ttpa).